Consider the following 881-residue polypeptide: Valine--tRNA ligase (881 aa).

A 'HIGH' region motif is present at residues 49 to 59 (PNVTGKLHLGH). The 'KMSKS' region motif lies at 526–530 (KMSKS). K529 contacts ATP. Residues 810 to 881 (LADLINLDEE…VRQRLADLEK (72 aa)) are a coiled coil.

Belongs to the class-I aminoacyl-tRNA synthetase family. ValS type 1 subfamily. In terms of assembly, monomer.

It localises to the cytoplasm. The enzyme catalyses tRNA(Val) + L-valine + ATP = L-valyl-tRNA(Val) + AMP + diphosphate. Its function is as follows. Catalyzes the attachment of valine to tRNA(Val). As ValRS can inadvertently accommodate and process structurally similar amino acids such as threonine, to avoid such errors, it has a 'posttransfer' editing activity that hydrolyzes mischarged Thr-tRNA(Val) in a tRNA-dependent manner. The sequence is that of Valine--tRNA ligase from Bacillus thuringiensis subsp. konkukian (strain 97-27).